The sequence spans 904 residues: Translation initiation factor IF-2 (904 aa).

3 disordered regions span residues 102–122 (TYVK…PDEE), 134–252 (RQRN…MVAG), and 267–316 (HLSA…ERPT). Over residues 134 to 177 (RQRNLEEQQRLAESDRVRDEAIQRKREEEQAAKDRAEAERKAAE) the composition is skewed to basic and acidic residues. A compositionally biased stretch (low complexity) spans 178–230 (EAAAAASAPAPVADAPKPSAAAPAARLPSSPSSAPRAARPAGASPASRPAAPA). A tr-type G domain is found at 403 to 572 (SRPPVVTIMG…SLQAEVLELK (170 aa)). The interval 412 to 419 (GHVDHGKT) is G1. 412–419 (GHVDHGKT) contributes to the GTP binding site. A G2 region spans residues 437 to 441 (GITQH). The interval 458-461 (DTPG) is G3. GTP is bound by residues 458–462 (DTPGH) and 512–515 (NKID). The tract at residues 512-515 (NKID) is G4. The segment at 548-550 (SAK) is G5.

Belongs to the TRAFAC class translation factor GTPase superfamily. Classic translation factor GTPase family. IF-2 subfamily.

Its subcellular location is the cytoplasm. Its function is as follows. One of the essential components for the initiation of protein synthesis. Protects formylmethionyl-tRNA from spontaneous hydrolysis and promotes its binding to the 30S ribosomal subunits. Also involved in the hydrolysis of GTP during the formation of the 70S ribosomal complex. In Xanthomonas axonopodis pv. citri (strain 306), this protein is Translation initiation factor IF-2.